Here is a 590-residue protein sequence, read N- to C-terminus: J protein JJJ1 (590 aa).

The 70-residue stretch at 3–72 (TCYYELLGVE…RAWYDSHKEQ (70 aa)) folds into the J domain. A compositionally biased stretch (basic and acidic residues) spans 269–284 (EQRKLKEQQRKNELNN). The interval 269-293 (EQRKLKEQQRKNELNNRRKFGNDNN) is disordered. The segment at 338–362 (YECFICNKTFKSEKQLKNHINTKLH) adopts a C2H2-type 1 zinc-finger fold. A Phosphoserine modification is found at S393. Residues 441 to 546 (EVEDVSSDEN…TLPSSMSPTS (106 aa)) are disordered. A compositionally biased stretch (basic residues) spans 455–467 (TKNKKKRKKKKKA). The segment covering 480-489 (DDTKDKRSNE) has biased composition (basic and acidic residues). T504 bears the Phosphothreonine mark. Positions 513-527 (KAKKKKGKQPKKNSK) are enriched in basic residues. Over residues 528-546 (STKSTPSLSTLPSSMSPTS) the composition is skewed to low complexity. A C2H2-type 2 zinc finger spans residues 549–573 (EVCTTCGESFDSRNKLFNHVKIAGH).

The protein resides in the nucleus. In Saccharomyces cerevisiae (strain ATCC 204508 / S288c) (Baker's yeast), this protein is J protein JJJ1 (JJJ1).